A 242-amino-acid chain; its full sequence is Protein odd-skipped-related 1 (242 aa).

3 consecutive C2H2-type zinc fingers follow at residues 128-150 (FICK…ERTH), 156-178 (FHCE…KYIH), and 184-207 (HKCE…SCHH).

This sequence belongs to the Odd C2H2-type zinc-finger protein family.

The protein localises to the nucleus. In terms of biological role, may function as transcription regulator. Essential for larval development. Required for morphogenesis and function of the digestive tract. This chain is Protein odd-skipped-related 1, found in Caenorhabditis elegans.